The primary structure comprises 192 residues: Thymidine kinase (192 aa).

Residues 9-16 and 87-90 contribute to the ATP site; these read SAMNAGKS and DECQ. Glu88 acts as the Proton acceptor in catalysis. The Zn(2+) site is built by Cys145, Cys147, Cys182, and His185.

It belongs to the thymidine kinase family. In terms of assembly, homotetramer.

It localises to the cytoplasm. It carries out the reaction thymidine + ATP = dTMP + ADP + H(+). The polypeptide is Thymidine kinase (Vibrio parahaemolyticus serotype O3:K6 (strain RIMD 2210633)).